A 248-amino-acid chain; its full sequence is Ureidoacrylate amidohydrolase RutB (248 aa).

The active-site Proton acceptor is the Asp41. Lys150 is a catalytic residue. The active-site Nucleophile is Cys183.

This sequence belongs to the isochorismatase family. RutB subfamily.

It catalyses the reaction (Z)-3-ureidoacrylate + H2O + H(+) = (Z)-3-aminoacrylate + NH4(+) + CO2. The catalysed reaction is (Z)-3-ureidoacrylate + H2O = (Z)-3-aminoacrylate + carbamate + H(+). It carries out the reaction (Z)-2-methylureidoacrylate + H2O + H(+) = (Z)-2-methylaminoacrylate + NH4(+) + CO2. In terms of biological role, hydrolyzes ureidoacrylate to form aminoacrylate and carbamate. The carbamate hydrolyzes spontaneously, thereby releasing one of the nitrogen atoms of the pyrimidine ring as ammonia and one of its carbon atoms as CO2. This Methylorubrum extorquens (strain CM4 / NCIMB 13688) (Methylobacterium extorquens) protein is Ureidoacrylate amidohydrolase RutB.